Reading from the N-terminus, the 251-residue chain is Probable transcriptional regulatory protein Caul_0780 (251 aa).

The protein belongs to the TACO1 family.

Its subcellular location is the cytoplasm. This chain is Probable transcriptional regulatory protein Caul_0780, found in Caulobacter sp. (strain K31).